A 56-amino-acid polypeptide reads, in one-letter code: Prokaryotic ubiquitin-like protein UBact (56 aa).

Residues 1–56 (MPDQAQKTRPVGPGPSGGGEGPGSPKVEKPNTEELLKRMRKVDPDQAKRYRQRTGQ) are disordered. Over residues 26–48 (KVEKPNTEELLKRMRKVDPDQAK) the composition is skewed to basic and acidic residues. The residue at position 56 (glutamine 56) is a Deamidated glutamine. Glutamine 56 is covalently cross-linked (Isoglutamyl lysine isopeptide (Gln-Lys) (interchain with K-? in acceptor proteins)).

This sequence belongs to the ubiquitin-like protein UBact family. In terms of processing, may be modified by deamidation of its C-terminal glutamine to glutamate by the adjacently encoded deamidase. This could be a prerequisite to the subsequent conjugation, as shown in the other prokaryotic ubiquitin-like protein Pup.

Its function is as follows. May function as a protein modifier covalently attached to lysine residues of substrate proteins. This may serve to target the modified proteins for degradation by proteasomes. In Pedosphaera parvula (strain Ellin514), this protein is Prokaryotic ubiquitin-like protein UBact.